Here is a 500-residue protein sequence, read N- to C-terminus: Beta-glucosidase 2 (500 aa).

The N-terminal stretch at 1–24 (MGAAAAAGFFFVLLFLSVQGGAVG) is a signal peptide. A beta-D-glucoside is bound by residues glutamine 44 and histidine 144. The active-site Proton donor is glutamate 190. A disulfide bond links cysteine 209 and cysteine 218. A glycan (N-linked (GlcNAc...) asparagine) is linked at asparagine 222. Positions 334 and 403 each coordinate a beta-D-glucoside. The Nucleophile role is filled by glutamate 403. Asparagine 410 carries an N-linked (GlcNAc...) asparagine glycan. Tryptophan 445 is a binding site for a beta-D-glucoside.

The protein belongs to the glycosyl hydrolase 1 family.

It catalyses the reaction Hydrolysis of terminal, non-reducing beta-D-glucosyl residues with release of beta-D-glucose.. The protein is Beta-glucosidase 2 (BGLU2) of Oryza sativa subsp. japonica (Rice).